Reading from the N-terminus, the 417-residue chain is UDP-N-acetylglucosamine 1-carboxyvinyltransferase (417 aa).

22 to 23 lines the phosphoenolpyruvate pocket; the sequence is KN. Arg91 contributes to the UDP-N-acetyl-alpha-D-glucosamine binding site. Cys115 (proton donor) is an active-site residue. Cys115 carries the post-translational modification 2-(S-cysteinyl)pyruvic acid O-phosphothioketal. Residues 120–124, Asp304, and Ile326 contribute to the UDP-N-acetyl-alpha-D-glucosamine site; that span reads RPVDQ.

The protein belongs to the EPSP synthase family. MurA subfamily.

It is found in the cytoplasm. It catalyses the reaction phosphoenolpyruvate + UDP-N-acetyl-alpha-D-glucosamine = UDP-N-acetyl-3-O-(1-carboxyvinyl)-alpha-D-glucosamine + phosphate. It participates in cell wall biogenesis; peptidoglycan biosynthesis. Cell wall formation. Adds enolpyruvyl to UDP-N-acetylglucosamine. The protein is UDP-N-acetylglucosamine 1-carboxyvinyltransferase of Desulfovibrio desulfuricans (strain ATCC 27774 / DSM 6949 / MB).